The primary structure comprises 3038 residues: Lovastatin nonaketide synthase, polyketide synthase component (3038 aa).

One can recognise a Ketosynthase family 3 (KS3) domain in the interval Asn-8 to Glu-447. Catalysis depends on for beta-ketoacyl synthase activity residues Cys-181, His-320, and His-367. Residues Ile-562 to Arg-889 are malonyl-CoA:ACP transacylase (MAT) domain. Catalysis depends on Ser-656, which acts as the For malonyltransferase activity. The lovC-binding stretch occupies residues Ala-695–Lys-757. Residues His-953–Val-1089 are N-terminal hotdog fold. The segment at His-953–Pro-1263 is dehydratase (DH) domain. The PKS/mFAS DH domain occupies His-953–Ser-1267. His-985 (proton acceptor; for dehydratase activity) is an active-site residue. Residues Glu-1107–Ser-1267 form a C-terminal hotdog fold region. The Proton donor; for dehydratase activity role is filled by Asp-1174. The tract at residues Leu-1443–Gln-1543 is methyltransferase (CMet) domain. The tract at residues Thr-2139–Ala-2437 is ketoreductase (KR) domain. Positions Gln-2463–Leu-2538 constitute a Carrier domain. O-(pantetheine 4'-phosphoryl)serine is present on Ser-2498. The tract at residues Val-2546–Pro-2602 is disordered. Positions Ser-2583–Glu-2594 are enriched in acidic residues. An inactive Condensation domain region spans residues Pro-2602–Phe-2952.

In terms of assembly, homodimer. Each MAT domain from the lovB homodimer binds one lovC molecule to form the final active lovB-lovC megasynthase complex. Requires pantetheine 4'-phosphate as cofactor.

It catalyses the reaction holo-[lovastatin nonaketide synthase] + 9 malonyl-CoA + S-adenosyl-L-methionine + 11 NADPH + 19 H(+) = dihydromonacolin L-[lovastatin nonaketide synthase] + S-adenosyl-L-homocysteine + 9 CO2 + 11 NADP(+) + 9 CoA + 6 H2O. It functions in the pathway polyketide biosynthesis; lovastatin biosynthesis. Functionally, lovastatin nonaketide synthase; part of the gene cluster that mediates the biosynthesis of lovastatin (also known as mevinolin, mevacor or monacolin K), a hypolipidemic inhibitor of (3S)-hydroxymethylglutaryl-coenzyme A (HMG-CoA) reductase (HMGR). The first step in the biosynthesis of lovastatin is the production of dihydromonacolin L acid by the lovastatin nonaketide synthase lovB and the trans-acting enoyl reductase lovC (called the lovB-lovC megasynthase complex) via condensation of one acetyl-CoA unit and 8 malonyl-CoA units. The formation of the LovB/C complex is essential for the integrity of the catalytic chamber to the complete total synthesis of DML acid. Dihydromonacolin L acid is released from lovB by the thioesterase lovG. Next, dihydromonacolin L acid is oxidized by the dihydromonacolin L monooxygenase lovA twice to form monacolin J acid. The 2-methylbutyrate moiety of lovastatin is synthesized by the lovastatin diketide synthase lovF via condensation of one acetyl-CoA unit and one malonyl-CoA unit. Finally, the covalent attachment of this moiety to monacolin J acid is catalyzed by the transesterase lovD to yield lovastatin. LovD has broad substrate specificity and can also convert monacolin J to simvastatin using alpha-dimethylbutanoyl-S-methyl-3-mercaptopropionate (DMB-S-MMP) as the thioester acyl donor, and can also catalyze the reverse reaction and function as hydrolase in vitro. LovD has much higher activity with LovF-bound 2-methylbutanoate than with free diketide substrates. This Aspergillus terreus protein is Lovastatin nonaketide synthase, polyketide synthase component.